The chain runs to 80 residues: Large ribosomal subunit protein bL31B (80 aa).

This sequence belongs to the bacterial ribosomal protein bL31 family. Type B subfamily. Part of the 50S ribosomal subunit.

This is Large ribosomal subunit protein bL31B from Oenococcus oeni (strain ATCC BAA-331 / PSU-1).